Here is a 591-residue protein sequence, read N- to C-terminus: L-fucose isomerase (591 aa).

Active-site proton acceptor residues include E337 and D361. Mn(2+)-binding residues include E337, D361, and H528.

Belongs to the L-fucose isomerase family. In terms of assembly, homohexamer. It depends on Mn(2+) as a cofactor.

It localises to the cytoplasm. It catalyses the reaction L-fucose = L-fuculose. It functions in the pathway carbohydrate degradation; L-fucose degradation; L-lactaldehyde and glycerone phosphate from L-fucose: step 1/3. Converts the aldose L-fucose into the corresponding ketose L-fuculose. This Escherichia coli (strain UTI89 / UPEC) protein is L-fucose isomerase.